The primary structure comprises 417 residues: Chaperone SurA (417 aa).

An N-terminal signal peptide occupies residues 1–12 (MGAALLCSFAHA). PpiC domains follow at residues 163 to 264 (SEEY…KLEE) and 273 to 372 (RDEV…QVLG).

It is found in the periplasm. The catalysed reaction is [protein]-peptidylproline (omega=180) = [protein]-peptidylproline (omega=0). Chaperone involved in the correct folding and assembly of outer membrane proteins. Recognizes specific patterns of aromatic residues and the orientation of their side chains, which are found more frequently in integral outer membrane proteins. May act in both early periplasmic and late outer membrane-associated steps of protein maturation. This is Chaperone SurA from Pseudomonas aeruginosa (strain ATCC 15692 / DSM 22644 / CIP 104116 / JCM 14847 / LMG 12228 / 1C / PRS 101 / PAO1).